The following is a 338-amino-acid chain: Phenylalanine--tRNA ligase alpha subunit (338 aa).

Glutamate 259 contacts Mg(2+).

Belongs to the class-II aminoacyl-tRNA synthetase family. Phe-tRNA synthetase alpha subunit type 1 subfamily. As to quaternary structure, tetramer of two alpha and two beta subunits. Mg(2+) serves as cofactor.

Its subcellular location is the cytoplasm. It catalyses the reaction tRNA(Phe) + L-phenylalanine + ATP = L-phenylalanyl-tRNA(Phe) + AMP + diphosphate + H(+). The chain is Phenylalanine--tRNA ligase alpha subunit from Janthinobacterium sp. (strain Marseille) (Minibacterium massiliensis).